Consider the following 94-residue polypeptide: Large ribosomal subunit protein bL25 (94 aa).

It belongs to the bacterial ribosomal protein bL25 family. As to quaternary structure, part of the 50S ribosomal subunit; part of the 5S rRNA/L5/L18/L25 subcomplex. Contacts the 5S rRNA. Binds to the 5S rRNA independently of L5 and L18.

Its function is as follows. This is one of the proteins that binds to the 5S RNA in the ribosome where it forms part of the central protuberance. The polypeptide is Large ribosomal subunit protein bL25 (Proteus mirabilis (strain HI4320)).